The chain runs to 207 residues: Protein phosphatase inhibitor 2 (207 aa).

Disordered regions lie at residues 1 to 44 (MAAS…SKKS), 65 to 97 (LMKIDEPSTPYHSMVADDEDALSDSETTEALTP), and 110 to 146 (ESLEPKYRVREQESSGDEDSDLSPEEREKKRQFEMKR). Position 2 is an N-acetylalanine (Ala2). The required for binding PPP1CC stretch occupies residues 12-17 (KGILKN). A compositionally biased stretch (low complexity) spans 19–28 (SSTTSSVVST). A compositionally biased stretch (basic and acidic residues) spans 35–44 (SVDEELSKKS). The interval 43 to 55 (KSQKWDEMSILAT) is required for binding PPP1CC. A Phosphoserine; by ATM modification is found at Ser44. Thr73 bears the Phosphothreonine; by GSK3 mark. The segment covering 80–91 (ADDEDALSDSET) has biased composition (acidic residues). A phosphoserine mark is found at Ser87 and Ser89. Phosphothreonine is present on residues Thr92 and Thr96. A compositionally biased stretch (basic and acidic residues) spans 112–122 (LEPKYRVREQE). Ser123, Ser124, Ser129, and Ser132 each carry phosphoserine. The span at 123 to 132 (SSGDEDSDLS) shows a compositional bias: acidic residues. A compositionally biased stretch (basic and acidic residues) spans 133-145 (PEEREKKRQFEMK). The required for binding PPP1CC catalytic center, displacing metal ions and inhibition of PPP1CC catalytic activity stretch occupies residues 149–152 (HYNE). Residues 165 to 207 (KDLNDEEEDEEMSETAAGESMNMEESSQGSATSDQLQNKSQSS) form a disordered region. Positions 168–177 (NDEEEDEEMS) are enriched in acidic residues. Residues 187 to 207 (MEESSQGSATSDQLQNKSQSS) are compositionally biased toward polar residues.

The protein belongs to the protein phosphatase inhibitor 2 family. Heterodimer with PP1. In terms of processing, phosphorylation on Ser-44 by ATM activates PP1 by dissociating the PP1-PPP1R2 complex. Phosphorylation on Thr-73 by GSK3 activates PP1 by dissociating the PP1-PPP1R2 complex.

In terms of biological role, inhibitor of protein-phosphatase 1. The protein is Protein phosphatase inhibitor 2 (PPP1R2) of Bos taurus (Bovine).